Here is a 533-residue protein sequence, read N- to C-terminus: Thromboxane-A synthase (533 aa).

The Cytoplasmic portion of the chain corresponds to 1–10; that stretch reads MEVLGLLKFE. The chain crosses the membrane as a helical span at residues 11-31; sequence VSGTVVTVTLSVVLLALLKWY. Over 32–75 the chain is Lumenal; it reads STSAFSRLRKLGIRHPEPSPFVGNLMFFRQGFWESHLELRERYG. The chain crosses the membrane as a helical span at residues 76–96; the sequence is PLCGYYLGRRMYIVISDPDMI. Residues 97–223 are Cytoplasmic-facing; it reads KEVLVENFSN…QRVFAFSTPR (127 aa). A helical membrane pass occupies residues 224 to 244; sequence PLLALILSFPSIMVPLARILP. Topologically, residues 245–335 are lumenal; the sequence is NKNRDELNGF…LTVDEIAGQA (91 aa). Residues 336 to 356 form a helical membrane-spanning segment; sequence FLFLIAGHEITTNTLSFITYL. The Cytoplasmic segment spans residues 357-533; that stretch reads LATHPECQER…NGVYVKIVSR (177 aa). Cysteine 479 contributes to the heme binding site.

This sequence belongs to the cytochrome P450 family. As to quaternary structure, monomer. Heme serves as cofactor. As to expression, expressed in bone marrow, spleen, lung, thymus, liver, uterus, and macrophages.

Its subcellular location is the endoplasmic reticulum membrane. It catalyses the reaction prostaglandin H2 = thromboxane A2. The catalysed reaction is prostaglandin H2 = (12S)-hydroxy-(5Z,8E,10E)-heptadecatrienoate + malonaldehyde. The enzyme catalyses a hydroperoxyeicosatetraenoate = an oxoeicosatetraenoate + H2O. It carries out the reaction (15S)-hydroperoxy-(5Z,8Z,11Z,13E)-eicosatetraenoate = 15-oxo-(5Z,8Z,11Z,13E)-eicosatetraenoate + H2O. It catalyses the reaction (15S)-hydroperoxy-(5Z,8Z,11Z,13E)-eicosatetraenoate + AH2 = (15S)-hydroxy-(5Z,8Z,11Z,13E)-eicosatetraenoate + A + H2O. Its function is as follows. Catalyzes the conversion of prostaglandin H2 (PGH2) to thromboxane A2 (TXA2), a potent inducer of blood vessel constriction and platelet aggregation. Also cleaves PGH2 to 12-hydroxy-heptadecatrienoicacid (12-HHT) and malondialdehyde, which is known to act as a mediator of DNA damage. 12-HHT and malondialdehyde are formed stoichiometrically in the same amounts as TXA2. Additionally, displays dehydratase activity, toward (15S)-hydroperoxy-(5Z,8Z,11Z,13E)-eicosatetraenoate (15(S)-HPETE) producing 15-KETE and 15-HETE. This Rattus norvegicus (Rat) protein is Thromboxane-A synthase (Tbxas1).